Here is a 209-residue protein sequence, read N- to C-terminus: Large ribosomal subunit protein uL3 (209 aa).

N5-methylglutamine is present on Gln150.

Belongs to the universal ribosomal protein uL3 family. In terms of assembly, part of the 50S ribosomal subunit. Forms a cluster with proteins L14 and L19. Methylated by PrmB.

Functionally, one of the primary rRNA binding proteins, it binds directly near the 3'-end of the 23S rRNA, where it nucleates assembly of the 50S subunit. The protein is Large ribosomal subunit protein uL3 of Salmonella paratyphi C (strain RKS4594).